A 236-amino-acid polypeptide reads, in one-letter code: Envelope glycoprotein (236 aa).

Topologically, residues 1–202 are lumenal; sequence CQFDGNTISG…EWILGVLNGN (202 aa). Asn-25 carries an N-linked (GlcNAc...) asparagine; by host glycan. Cystine bridges form between Cys-67–Cys-97, Cys-90–Cys-142, Cys-107–Cys-112, Cys-143–Cys-148, and Cys-182–Cys-186. The chain crosses the membrane as a helical span at residues 203 to 223; sequence WMVVAVLIALLILSILLFTLC. Binding to the ribonucleoprotein stretches follow at residues 219–231 and 219–236; these read LFTL…PSYR and LFTL…EHKP. Residues 224–236 lie on the Cytoplasmic side of the membrane; the sequence is CPRRPSYRKEHKP.

Belongs to the hantavirus envelope glycoprotein family. As to quaternary structure, homodimer. Homotetramer; forms heterotetrameric Gn-Gc spikes in the pre-fusion conformation. Homotrimer; forms homotrimer in the post-fusion conformation at acidic pH. Interacts (via C-terminus) with the nucleoprotein. Post-translationally, envelope polyprotein precursor is quickly cleaved in vivo just after synthesis, presumably by host signal peptidase.

The protein localises to the virion membrane. Its subcellular location is the host cell surface. It is found in the host Golgi apparatus membrane. It localises to the host endoplasmic reticulum membrane. In terms of biological role, forms homotetramers with glycoprotein N at the surface of the virion. Attaches the virion to host cell receptors including integrin ITGAV/ITGB3. This attachment induces virion internalization predominantly through clathrin-dependent endocytosis. Class II fusion protein that promotes fusion of viral membrane with host endosomal membrane after endocytosis of the virion. The sequence is that of Envelope glycoprotein (GP) from Homo sapiens (Human).